Reading from the N-terminus, the 203-residue chain is uncharacterized protein (203 aa).

Disordered stretches follow at residues 65-84 (LSLS…SFDS) and 92-170 (SSSS…ETAL). Composition is skewed to acidic residues over residues 68–82 (SEDE…EDSF) and 98–110 (SEEE…EESL). Residues 111–122 (DSSFLVSASLSL) show a composition bias toward low complexity. The span at 123-168 (SEDDEEEDSESEDEDEDEDSDSDSDSDSDSDEDEDEDEDSEEEEET) shows a compositional bias: acidic residues. The helical transmembrane segment at 182–202 (TSFLLPFTLVVLAILFYPAWV) threads the bilayer.

The protein resides in the membrane. This is an uncharacterized protein from Saccharomyces cerevisiae (strain ATCC 204508 / S288c) (Baker's yeast).